The chain runs to 199 residues: Pyridoxal 5'-phosphate synthase subunit PdxT (199 aa).

An L-glutamine-binding site is contributed by 47-49 (GES). Cys79 functions as the Nucleophile in the catalytic mechanism. Residues Arg106 and 133-134 (IR) contribute to the L-glutamine site. Catalysis depends on charge relay system residues His169 and Glu171.

This sequence belongs to the glutaminase PdxT/SNO family. In terms of assembly, in the presence of PdxS, forms a dodecamer of heterodimers. Only shows activity in the heterodimer.

It carries out the reaction aldehydo-D-ribose 5-phosphate + D-glyceraldehyde 3-phosphate + L-glutamine = pyridoxal 5'-phosphate + L-glutamate + phosphate + 3 H2O + H(+). The catalysed reaction is L-glutamine + H2O = L-glutamate + NH4(+). It participates in cofactor biosynthesis; pyridoxal 5'-phosphate biosynthesis. Catalyzes the hydrolysis of glutamine to glutamate and ammonia as part of the biosynthesis of pyridoxal 5'-phosphate. The resulting ammonia molecule is channeled to the active site of PdxS. The polypeptide is Pyridoxal 5'-phosphate synthase subunit PdxT (Desulfitobacterium hafniense (strain DSM 10664 / DCB-2)).